The following is a 150-amino-acid chain: Putative HTH-type transcriptional regulator rrf2-like (150 aa).

The HTH rrf2-type domain occupies 1–139; sequence MITQKMKYAL…DSLTLEDMLA (139 aa).

This is Putative HTH-type transcriptional regulator rrf2-like from Rhodobacter capsulatus (strain ATCC BAA-309 / NBRC 16581 / SB1003).